Here is a 134-residue protein sequence, read N- to C-terminus: ATP synthase epsilon chain, chloroplastic (134 aa).

It belongs to the ATPase epsilon chain family. F-type ATPases have 2 components, CF(1) - the catalytic core - and CF(0) - the membrane proton channel. CF(1) has five subunits: alpha(3), beta(3), gamma(1), delta(1), epsilon(1). CF(0) has three main subunits: a, b and c.

It is found in the plastid. Its subcellular location is the chloroplast thylakoid membrane. In terms of biological role, produces ATP from ADP in the presence of a proton gradient across the membrane. This chain is ATP synthase epsilon chain, chloroplastic, found in Porphyra purpurea (Red seaweed).